Here is a 558-residue protein sequence, read N- to C-terminus: Dihydroxy-acid dehydratase (558 aa).

C50 is a binding site for [2Fe-2S] cluster. D82 provides a ligand contact to Mg(2+). C123 is a binding site for [2Fe-2S] cluster. The Mg(2+) site is built by D124 and K125. At K125 the chain carries N6-carboxylysine. Residue C195 participates in [2Fe-2S] cluster binding. Position 447 (E447) interacts with Mg(2+). S472 acts as the Proton acceptor in catalysis.

It belongs to the IlvD/Edd family. Homodimer. The cofactor is [2Fe-2S] cluster. Mg(2+) serves as cofactor.

The enzyme catalyses (2R)-2,3-dihydroxy-3-methylbutanoate = 3-methyl-2-oxobutanoate + H2O. The catalysed reaction is (2R,3R)-2,3-dihydroxy-3-methylpentanoate = (S)-3-methyl-2-oxopentanoate + H2O. It participates in amino-acid biosynthesis; L-isoleucine biosynthesis; L-isoleucine from 2-oxobutanoate: step 3/4. The protein operates within amino-acid biosynthesis; L-valine biosynthesis; L-valine from pyruvate: step 3/4. Functions in the biosynthesis of branched-chain amino acids. Catalyzes the dehydration of (2R,3R)-2,3-dihydroxy-3-methylpentanoate (2,3-dihydroxy-3-methylvalerate) into 2-oxo-3-methylpentanoate (2-oxo-3-methylvalerate) and of (2R)-2,3-dihydroxy-3-methylbutanoate (2,3-dihydroxyisovalerate) into 2-oxo-3-methylbutanoate (2-oxoisovalerate), the penultimate precursor to L-isoleucine and L-valine, respectively. The sequence is that of Dihydroxy-acid dehydratase from Saccharolobus islandicus (strain Y.N.15.51 / Yellowstone #2) (Sulfolobus islandicus).